The primary structure comprises 341 residues: DNA-directed RNA polymerase subunit alpha (341 aa).

Residues 1 to 233 form an alpha N-terminal domain (alpha-NTD) region; that stretch reads MLKDGTSVSN…DLLSPFLHTK (233 aa). The tract at residues 262 to 341 is alpha C-terminal domain (alpha-CTD); sequence SEGDFFKNTF…NEKPRVVGDE (80 aa).

It belongs to the RNA polymerase alpha chain family. In plastids the minimal PEP RNA polymerase catalytic core is composed of four subunits: alpha, beta, beta', and beta''. When a (nuclear-encoded) sigma factor is associated with the core the holoenzyme is formed, which can initiate transcription.

The protein localises to the plastid. Its subcellular location is the chloroplast. The catalysed reaction is RNA(n) + a ribonucleoside 5'-triphosphate = RNA(n+1) + diphosphate. Functionally, DNA-dependent RNA polymerase catalyzes the transcription of DNA into RNA using the four ribonucleoside triphosphates as substrates. This chain is DNA-directed RNA polymerase subunit alpha, found in Marsilea quadrifolia (European water clover).